The following is a 140-amino-acid chain: Protein S40-1 (140 aa).

Residues 16–58 form a disordered region; that stretch reads YFPIRRREDGNEKENNRPVDFRENSERVWNKSSRRSKTTPLPS. Residues 20–44 show a composition bias toward basic and acidic residues; sequence RRREDGNEKENNRPVDFRENSERVW.

The protein belongs to the senescence regulator S40 family.

It is found in the cytoplasm. The protein is Protein S40-1 of Arabidopsis thaliana (Mouse-ear cress).